Consider the following 59-residue polypeptide: Chromatin protein Cren7 (59 aa).

The protein belongs to the Cren7 family. Monomer. In terms of processing, methylated at multiple sites, to varying extents.

The protein resides in the chromosome. It is found in the cytoplasm. In terms of biological role, a chromatin protein, binds double-stranded DNA without sequence specificity. Constrains negative DNA supercoils. This Sulfolobus acidocaldarius (strain ATCC 33909 / DSM 639 / JCM 8929 / NBRC 15157 / NCIMB 11770) protein is Chromatin protein Cren7.